We begin with the raw amino-acid sequence, 163 residues long: Adenosine 5'-monophosphoramidase HINT2 (163 aa).

The transit peptide at 1–17 (MAAAVLLAVGLRAARRT) directs the protein to the mitochondrion. Lysine 45 bears the N6-succinyllysine mark. The HIT domain maps to 55 to 163 (IFSRILDRSL…GGRQLQWPPG (109 aa)). The AMP site is built by serine 63 and aspartate 80. Lysine 119 carries the N6-acetyllysine modification. The residue at position 128 (lysine 128) is an N6-acetyllysine; alternate. Lysine 128 is modified (N6-succinyllysine; alternate). Asparagine 136 provides a ligand contact to AMP. An N6-acetyllysine modification is found at lysine 139. AMP-binding positions include 142 to 145 (AQSV) and 149 to 151 (HIH). The Histidine triad motif signature appears at 147–151 (HLHIH). The active-site Tele-AMP-histidine intermediate is histidine 149.

The protein belongs to the HINT family.

It is found in the mitochondrion. It catalyses the reaction adenosine 5'-phosphoramidate + H2O = AMP + NH4(+). In terms of biological role, exhibits adenosine 5'-monophosphoramidase activity, hydrolyzing purine nucleotide phosphoramidates with a single phosphate group such as adenosine 5'monophosphoramidate (AMP-NH2) to yield AMP and NH2. Hydrolyzes adenosine 5'-O-p-nitrophenylphosphoramidate (AMP-pNA). May be involved in steroid biosynthesis. May play a role in apoptosis. This is Adenosine 5'-monophosphoramidase HINT2 from Mus musculus (Mouse).